Reading from the N-terminus, the 110-residue chain is NADH dehydrogenase [ubiquinone] iron-sulfur protein 6, mitochondrial (110 aa).

A mitochondrion-targeting transit peptide spans 1–22 (MASNLLKALIRSQILPSSRRNF).

The protein belongs to the complex I NDUFS6 subunit family. In terms of assembly, complex I is composed of at least 49 different subunits. This is a component of the iron-sulfur (IP) fragment of the enzyme.

It localises to the mitochondrion inner membrane. In terms of biological role, accessory subunit of the mitochondrial membrane respiratory chain NADH dehydrogenase (Complex I), that is believed not to be involved in catalysis. Complex I functions in the transfer of electrons from NADH to the respiratory chain. The immediate electron acceptor for the enzyme is believed to be ubiquinone. The protein is NADH dehydrogenase [ubiquinone] iron-sulfur protein 6, mitochondrial of Arabidopsis thaliana (Mouse-ear cress).